A 520-amino-acid chain; its full sequence is Laccase-1 (520 aa).

The N-terminal stretch at 1–21 (MSRFHSLLAFVVASLTAVAHA) is a signal peptide. Plastocyanin-like domains are found at residues 23-148 (IGPV…FVVY) and 160-302 (VDND…ILRY). N72 and N75 each carry an N-linked (GlcNAc...) asparagine glycan. Residues H85, H87, H130, and H132 each coordinate Cu cation. Cystine bridges form between C106/C509 and C138/C226. N229, N238, N354, and N361 each carry an N-linked (GlcNAc...) asparagine glycan. In terms of domain architecture, Plastocyanin-like 3 spans 369 to 491 (TVPVLLQIIS…AGFAVVFAED (123 aa)). The Cu cation site is built by H416, H419, H421, H473, C474, H475, and H479.

It belongs to the multicopper oxidase family. Homodimer. It depends on Cu cation as a cofactor.

It localises to the secreted. The catalysed reaction is 4 hydroquinone + O2 = 4 benzosemiquinone + 2 H2O. Its function is as follows. Lignin degradation and detoxification of lignin-derived products. This Trametes villosa (White-rot fungus) protein is Laccase-1.